Reading from the N-terminus, the 207-residue chain is Thymidylate kinase (207 aa).

7-14 (GCEGSGKS) provides a ligand contact to ATP.

Belongs to the thymidylate kinase family.

It carries out the reaction dTMP + ATP = dTDP + ADP. Functionally, phosphorylation of dTMP to form dTDP in both de novo and salvage pathways of dTTP synthesis. This Chlamydia felis (strain Fe/C-56) (Chlamydophila felis) protein is Thymidylate kinase.